The chain runs to 494 residues: Guanosine-5'-triphosphate,3'-diphosphate pyrophosphatase (494 aa).

The protein belongs to the GppA/Ppx family. GppA subfamily.

The enzyme catalyses guanosine 3'-diphosphate 5'-triphosphate + H2O = guanosine 3',5'-bis(diphosphate) + phosphate + H(+). It functions in the pathway purine metabolism; ppGpp biosynthesis; ppGpp from GTP: step 2/2. Catalyzes the conversion of pppGpp to ppGpp. Guanosine pentaphosphate (pppGpp) is a cytoplasmic signaling molecule which together with ppGpp controls the 'stringent response', an adaptive process that allows bacteria to respond to amino acid starvation, resulting in the coordinated regulation of numerous cellular activities. The chain is Guanosine-5'-triphosphate,3'-diphosphate pyrophosphatase from Shigella flexneri.